Reading from the N-terminus, the 593-residue chain is Salivary alpha-glucosidase (593 aa).

Positions 1-19 (MPPLGVLLLLVALGHSTQG) are cleaved as a signal peptide. The Ca(2+) site is built by Asp49, Asp51, Asp53, Ile55, Asp57, and Asn130. N-linked (GlcNAc...) asparagine glycans are attached at residues Asn130 and Asn163. The Ca(2+) site is built by Asp201, Tyr235, Leu236, and Glu238. Residues Asn295, Asn310, Asn338, Asn414, Asn445, and Asn453 are each glycosylated (N-linked (GlcNAc...) asparagine). Residue Asn338 participates in N-acetyl-beta-D-glucosamine binding.

It belongs to the glycosyl hydrolase 13 family. As to expression, saliva (at protein level). Proximal lateral lobes of the salivary gland (at protein level).

Its subcellular location is the secreted. It catalyses the reaction Hydrolysis of terminal, non-reducing (1-&gt;4)-linked alpha-D-glucose residues with release of alpha-D-glucose.. In terms of biological role, functions as a glucosidase that shows high activity toward sucrose, a major component of nectar. Assists the mosquito in its sugar-feeding capabilities. The chain is Salivary alpha-glucosidase from Anopheles gambiae (African malaria mosquito).